A 301-amino-acid polypeptide reads, in one-letter code: UDP-N-acetylenolpyruvoylglucosamine reductase 1 (301 aa).

Positions 29 to 196 constitute an FAD-binding PCMH-type domain; the sequence is KIGGPADILI…LEAVFQLQAG (168 aa). Arginine 174 is a catalytic residue. Serine 225 acts as the Proton donor in catalysis. Residue glutamate 295 is part of the active site.

Belongs to the MurB family. Requires FAD as cofactor.

The protein localises to the cytoplasm. It carries out the reaction UDP-N-acetyl-alpha-D-muramate + NADP(+) = UDP-N-acetyl-3-O-(1-carboxyvinyl)-alpha-D-glucosamine + NADPH + H(+). The protein operates within cell wall biogenesis; peptidoglycan biosynthesis. Its function is as follows. Cell wall formation. The sequence is that of UDP-N-acetylenolpyruvoylglucosamine reductase 1 (murB1) from Bacillus cereus (strain ATCC 14579 / DSM 31 / CCUG 7414 / JCM 2152 / NBRC 15305 / NCIMB 9373 / NCTC 2599 / NRRL B-3711).